A 259-amino-acid chain; its full sequence is uncharacterized protein (259 aa).

In terms of domain architecture, HD spans 51-173 (GKTHAKIVAN…IAVADGTDMT (123 aa)).

This is an uncharacterized protein from Methanocaldococcus jannaschii (strain ATCC 43067 / DSM 2661 / JAL-1 / JCM 10045 / NBRC 100440) (Methanococcus jannaschii).